Reading from the N-terminus, the 282-residue chain is 4-diphosphocytidyl-2-C-methyl-D-erythritol kinase (282 aa).

Lys-12 is a catalytic residue. 95-105 provides a ligand contact to ATP; sequence PMGGGIGGGSS. Asp-137 is an active-site residue.

It belongs to the GHMP kinase family. IspE subfamily.

It carries out the reaction 4-CDP-2-C-methyl-D-erythritol + ATP = 4-CDP-2-C-methyl-D-erythritol 2-phosphate + ADP + H(+). It functions in the pathway isoprenoid biosynthesis; isopentenyl diphosphate biosynthesis via DXP pathway; isopentenyl diphosphate from 1-deoxy-D-xylulose 5-phosphate: step 3/6. In terms of biological role, catalyzes the phosphorylation of the position 2 hydroxy group of 4-diphosphocytidyl-2C-methyl-D-erythritol. The polypeptide is 4-diphosphocytidyl-2-C-methyl-D-erythritol kinase (Pseudomonas aeruginosa (strain LESB58)).